Reading from the N-terminus, the 622-residue chain is Sodium/potassium/calcium exchanger 4 (622 aa).

The N-terminal stretch at 1 to 38 (MALRGLIRQSKVRRRREMLPQQVGFVCAVLALVCCASG) is a signal peptide. At 39 to 97 (LFGSLGHKTASAGKHVLLDTWRNRKLMAPINGTPLAKNCTDPAIHEFPTDLFSNKERQH) the chain is on the extracellular side. Asparagine 76 carries an N-linked (GlcNAc...) asparagine glycan. Residues 98-118 (GAVLLHILGALYMFYALAIVC) traverse the membrane as a helical segment. Over 119–142 (DDFFVPSLEKICEKLHLSEDVAGA) the chain is Cytoplasmic. The stretch at 139 to 179 (VAGATFMAAGSSTPELFASVIGVFITHGDVGVGTIVGSAVF) is one Alpha-1 repeat. A helical transmembrane segment spans residues 143–163 (TFMAAGSSTPELFASVIGVFI). Residues 164-172 (THGDVGVGT) are Extracellular-facing. Residues 173 to 193 (IVGSAVFNILCIIGVCGLFAG) traverse the membrane as a helical segment. Over 194–200 (QVVRLTW) the chain is Cytoplasmic. The chain crosses the membrane as a helical span at residues 201 to 221 (WAVCRDSVYYTLSVIVLIAFI). At 222 to 224 (YDE) the chain is on the extracellular side. Residues 225 to 245 (EIVWWEGLVLIILYVFYILIM) traverse the membrane as a helical segment. Residues 246–457 (KYNMKMQTFF…RWEKFFMVTF (212 aa)) lie on the Cytoplasmic side of the membrane. The disordered stretch occupies residues 358–408 (ANGVNSKPLQNGRHENMENGNVPVENPEDPQQGQEQQPPPQPPPPEPESVE). The segment covering 394-404 (QPPPQPPPPEP) has biased composition (pro residues). The helical transmembrane segment at 458 to 478 (ITATLWIAVFSYLMVWLVTII) threads the bilayer. Residue glycine 479 is a topological domain, extracellular. The chain crosses the membrane as a helical span at residues 480–500 (YTLGIPDVIMGITFLAAGTSV). The Alpha-2 repeat unit spans residues 495 to 526 (AAGTSVPDCMASLIVARQGLGDMAVSNTIGSN). At 501 to 526 (PDCMASLIVARQGLGDMAVSNTIGSN) the chain is on the cytoplasmic side. A helical transmembrane segment spans residues 527-547 (VFDILVGLGIPWGLQTMVINY). Topologically, residues 548–557 (GSTVKINSRG) are extracellular. The helical transmembrane segment at 558-578 (LVYSVVLLLGSVALTVLGIHL) threads the bilayer. Topologically, residues 579–586 (NKWRLDRK) are cytoplasmic. A helical transmembrane segment spans residues 587–607 (LGIYVLVLYAVFLCFSIMIEF). The Extracellular portion of the chain corresponds to 608–622 (NVFTFVNLPMCREDD).

The protein belongs to the Ca(2+):cation antiporter (CaCA) (TC 2.A.19) family. SLC24A subfamily. As to expression, expressed in late secretory-stage and maturation-stage ameloblasts, with significantly increased expression during the late stages of amelogenesis (at protein level). Widely expressed in most regions of the brain, including hippocampus, neocortex, thalamus, striatum and olfactory bulb. Expressed in the olfactory sensory neurons.

The protein localises to the cell membrane. It is found in the cytoplasm. It catalyses the reaction Ca(2+)(out) + K(+)(out) + 4 Na(+)(in) = Ca(2+)(in) + K(+)(in) + 4 Na(+)(out). In terms of biological role, calcium, potassium:sodium antiporter that transports 1 Ca(2+) and 1 K(+) in exchange for 4 Na(+). Controls the rapid response termination and proper regulation of adaptation in olfactory sensory neurons (OSNs) which subsequently influences how odor information is encoded and perceived. May play a role in calcium transport during amelogenesis. The sequence is that of Sodium/potassium/calcium exchanger 4 from Mus musculus (Mouse).